A 147-amino-acid chain; its full sequence is Large ribosomal subunit protein uL15 (147 aa).

A disordered region spans residues 1–46 (MSIRLENLSYTPGARKEKHRKGRGHAAGKGKQAGRGQSGQKKRSTV). Positions 16–28 (KEKHRKGRGHAAG) are enriched in basic residues.

The protein belongs to the universal ribosomal protein uL15 family. As to quaternary structure, part of the 50S ribosomal subunit.

Its function is as follows. Binds to the 23S rRNA. In Mesomycoplasma hyopneumoniae (strain J / ATCC 25934 / NCTC 10110) (Mycoplasma hyopneumoniae), this protein is Large ribosomal subunit protein uL15.